A 100-amino-acid chain; its full sequence is Urease subunit gamma (100 aa).

Belongs to the urease gamma subunit family. In terms of assembly, heterotrimer of UreA (gamma), UreB (beta) and UreC (alpha) subunits. Three heterotrimers associate to form the active enzyme.

The protein localises to the cytoplasm. It carries out the reaction urea + 2 H2O + H(+) = hydrogencarbonate + 2 NH4(+). Its pathway is nitrogen metabolism; urea degradation; CO(2) and NH(3) from urea (urease route): step 1/1. The polypeptide is Urease subunit gamma (Pseudomonas syringae pv. syringae (strain B728a)).